We begin with the raw amino-acid sequence, 492 residues long: Adenosylhomocysteinase-like 2 (492 aa).

The disordered stretch occupies residues 43 to 64 (FTGSSDEEDVSPKDNHQRNSAG). 2 residues coordinate substrate: Asp192 and Glu217. 218–220 (SVT) serves as a coordination point for NAD(+). Residues Lys247 and Asp251 each coordinate substrate. NAD(+) is bound by residues 283–288 (GDVGKG), Glu304, 360–362 (MGH), Asn407, Lys486, 486–490 (KANYY), and Tyr490.

The protein belongs to the adenosylhomocysteinase family. The cofactor is NAD(+).

Might play a role in the regulation of methionine metabolism. The chain is Adenosylhomocysteinase-like 2 from Drosophila melanogaster (Fruit fly).